Here is a 384-residue protein sequence, read N- to C-terminus: S-adenosylmethionine synthase (384 aa).

Histidine 15 is an ATP binding site. Aspartate 17 contacts Mg(2+). A K(+)-binding site is contributed by glutamate 43. Positions 56 and 99 each coordinate L-methionine. The segment at 99–109 (QSPDINQGVDR) is flexible loop. ATP is bound by residues 164–166 (DAK), 230–231 (RF), aspartate 239, 245–246 (RK), alanine 262, and lysine 266. Aspartate 239 contributes to the L-methionine binding site. Lysine 270 provides a ligand contact to L-methionine.

It belongs to the AdoMet synthase family. Homotetramer; dimer of dimers. Requires Mg(2+) as cofactor. It depends on K(+) as a cofactor.

Its subcellular location is the cytoplasm. The catalysed reaction is L-methionine + ATP + H2O = S-adenosyl-L-methionine + phosphate + diphosphate. The protein operates within amino-acid biosynthesis; S-adenosyl-L-methionine biosynthesis; S-adenosyl-L-methionine from L-methionine: step 1/1. Its function is as follows. Catalyzes the formation of S-adenosylmethionine (AdoMet) from methionine and ATP. The overall synthetic reaction is composed of two sequential steps, AdoMet formation and the subsequent tripolyphosphate hydrolysis which occurs prior to release of AdoMet from the enzyme. The chain is S-adenosylmethionine synthase from Salmonella choleraesuis (strain SC-B67).